The chain runs to 242 residues: UPF0309 protein BH3325 (242 aa).

In terms of domain architecture, SIS spans 34-217 (VSEAVMNGGR…HLLVQQGFEP (184 aa)).

It belongs to the UPF0309 family.

The protein is UPF0309 protein BH3325 of Halalkalibacterium halodurans (strain ATCC BAA-125 / DSM 18197 / FERM 7344 / JCM 9153 / C-125) (Bacillus halodurans).